A 398-amino-acid polypeptide reads, in one-letter code: G2/mitotic-specific cyclin-B2 (398 aa).

T8 is modified (phosphothreonine). S11, S77, and S92 each carry phosphoserine. T94 carries the phosphothreonine modification. Phosphoserine is present on residues S99, S392, and S398.

Belongs to the cyclin family. Cyclin AB subfamily. Interacts with the CDK1 protein kinase to form a serine/threonine kinase holoenzyme complex also known as maturation promoting factor (MPF). The cyclin subunit imparts substrate specificity to the complex.

Essential for the control of the cell cycle at the G2/M (mitosis) transition. This chain is G2/mitotic-specific cyclin-B2 (CCNB2), found in Macaca fascicularis (Crab-eating macaque).